Reading from the N-terminus, the 168-residue chain is RxLR effector protein CRE8 (168 aa).

The first 23 residues, 1-23, serve as a signal peptide directing secretion; it reads MRLPSILVVAASTLFLHYGYTSA. Positions 54–69 match the RxLR-dEER motif; sequence RFLRDGKIAEGDNEER.

It belongs to the RxLR effector family.

The protein resides in the secreted. The protein localises to the host cell. Its function is as follows. Effector that is involved in host plant infection. Contributes to virulence during the early infection stage, by inhibiting plant defense responses induced by both PAMP-triggered immunity (PTI) and effector-triggered immunity (ETI). In Phytophthora infestans (strain T30-4) (Potato late blight agent), this protein is RxLR effector protein CRE8.